The sequence spans 133 residues: Small ribosomal subunit protein uS8 (133 aa).

Belongs to the universal ribosomal protein uS8 family. Part of the 30S ribosomal subunit. Contacts proteins S5 and S12.

Its function is as follows. One of the primary rRNA binding proteins, it binds directly to 16S rRNA central domain where it helps coordinate assembly of the platform of the 30S subunit. The chain is Small ribosomal subunit protein uS8 from Synechococcus sp. (strain CC9605).